The chain runs to 344 residues: L-rhamnose-proton symporter (344 aa).

10 helical membrane-spanning segments follow: residues isoleucine 5–proline 25, tryptophan 38–leucine 58, isoleucine 72–leucine 92, methionine 101–isoleucine 121, threonine 137–leucine 157, leucine 175–alanine 195, leucine 214–isoleucine 234, isoleucine 259–glycine 279, phenylalanine 289–leucine 309, and valine 323–alanine 343.

The protein belongs to the L-rhamnose transporter (TC 2.A.7.6) family.

It localises to the cell inner membrane. The catalysed reaction is L-rhamnopyranose(in) + H(+)(in) = L-rhamnopyranose(out) + H(+)(out). Uptake of L-rhamnose across the cytoplasmic membrane with the concomitant transport of protons into the cell (symport system). In Mannheimia succiniciproducens (strain KCTC 0769BP / MBEL55E), this protein is L-rhamnose-proton symporter.